The primary structure comprises 363 residues: Fructose-bisphosphate aldolase 2 (363 aa).

Residue Ser-61 coordinates D-glyceraldehyde 3-phosphate. Asp-109 serves as the catalytic Proton donor. His-110, Asp-144, Glu-174, and His-226 together coordinate Zn(2+). Gly-227 lines the dihydroxyacetone phosphate pocket. Residue His-264 coordinates Zn(2+). 265-267 (GGS) is a binding site for dihydroxyacetone phosphate.

Belongs to the class II fructose-bisphosphate aldolase family. Homodimer. Requires Zn(2+) as cofactor.

The catalysed reaction is beta-D-fructose 1,6-bisphosphate = D-glyceraldehyde 3-phosphate + dihydroxyacetone phosphate. The protein operates within carbohydrate degradation; glycolysis; D-glyceraldehyde 3-phosphate and glycerone phosphate from D-glucose: step 4/4. Functionally, catalyzes the aldol condensation of dihydroxyacetone phosphate (DHAP or glycerone-phosphate) with glyceraldehyde 3-phosphate (G3P) to form fructose 1,6-bisphosphate (FBP) in gluconeogenesis and the reverse reaction in glycolysis. The polypeptide is Fructose-bisphosphate aldolase 2 (FBA2) (Paracoccidioides lutzii (strain ATCC MYA-826 / Pb01) (Paracoccidioides brasiliensis)).